The chain runs to 513 residues: Putative fucosyltransferase-like protein (513 aa).

The interval 1–34 (MGVFSNLRGPRAGATHDEFPATNGSPSSSSSPSS) is disordered. Over 1 to 39 (MGVFSNLRGPRAGATHDEFPATNGSPSSSSSPSSSIKRK) the chain is Cytoplasmic. The segment covering 25–34 (SPSSSSSPSS) has biased composition (low complexity). The chain crosses the membrane as a helical; Signal-anchor for type II membrane protein span at residues 40–60 (LSNLLPLCVALVVIAEIGFLG). Topologically, residues 61–513 (RLDKVALVDT…PCAKFEVVFV (453 aa)) are lumenal. Residues N348 and N493 are each glycosylated (N-linked (GlcNAc...) asparagine).

The protein belongs to the glycosyltransferase 10 family.

The protein localises to the golgi apparatus. Its subcellular location is the golgi stack membrane. Its pathway is protein modification; protein glycosylation. May be involved in cell wall biosynthesis. May act as a fucosyltransferase. The polypeptide is Putative fucosyltransferase-like protein (FUT12) (Arabidopsis thaliana (Mouse-ear cress)).